A 345-amino-acid polypeptide reads, in one-letter code: Biotin synthase (345 aa).

Residues 38–256 (RQVQVSTLLS…IAVARIMMPS (219 aa)) form the Radical SAM core domain. [4Fe-4S] cluster is bound by residues Cys53, Cys57, and Cys60. The [2Fe-2S] cluster site is built by Cys97, Cys128, Cys188, and Arg260.

Belongs to the radical SAM superfamily. Biotin synthase family. Homodimer. [4Fe-4S] cluster serves as cofactor. It depends on [2Fe-2S] cluster as a cofactor.

The enzyme catalyses (4R,5S)-dethiobiotin + (sulfur carrier)-SH + 2 reduced [2Fe-2S]-[ferredoxin] + 2 S-adenosyl-L-methionine = (sulfur carrier)-H + biotin + 2 5'-deoxyadenosine + 2 L-methionine + 2 oxidized [2Fe-2S]-[ferredoxin]. It functions in the pathway cofactor biosynthesis; biotin biosynthesis; biotin from 7,8-diaminononanoate: step 2/2. In terms of biological role, catalyzes the conversion of dethiobiotin (DTB) to biotin by the insertion of a sulfur atom into dethiobiotin via a radical-based mechanism. The polypeptide is Biotin synthase (Yersinia pseudotuberculosis serotype O:1b (strain IP 31758)).